A 397-amino-acid chain; its full sequence is Putative nickel insertion protein (397 aa).

It belongs to the LarC family.

The polypeptide is Putative nickel insertion protein (Synechococcus sp. (strain JA-3-3Ab) (Cyanobacteria bacterium Yellowstone A-Prime)).